An 81-amino-acid chain; its full sequence is Envelope small membrane protein (81 aa).

Topologically, residues 1–19 (MTFPRALTVIDDNGLVISI) are virion surface. Residues 20–40 (IFWFLLIIILILFSIALLNII) traverse the membrane as a helical segment. Residues 41 to 81 (KLCMVCCNLGRTVIVPVQHAYDAYKNFMRIKAYNHDGALLV) lie on the Intravirion side of the membrane.

It belongs to the alphacoronaviruses E protein family. In terms of assembly, homopentamer. Interacts with membrane protein M in the budding compartment of the host cell, which is located between endoplasmic reticulum and the Golgi complex. Interacts with Nucleoprotein.

It localises to the host Golgi apparatus membrane. Its function is as follows. Plays a central role in virus morphogenesis and assembly. Acts as a viroporin and self-assembles in host membranes forming pentameric protein-lipid pores that allow ion transport. Also plays a role in the induction of apoptosis. The polypeptide is Envelope small membrane protein (Porcine transmissible gastroenteritis coronavirus (strain FS772/70) (TGEV)).